Consider the following 249-residue polypeptide: Glucosamine-6-phosphate deaminase (249 aa).

Residue Asp-67 is the Proton acceptor; for enolization step of the active site. Asn-136 acts as the For ring-opening step in catalysis. His-138 acts as the Proton acceptor; for ring-opening step in catalysis. The active-site For ring-opening step is Glu-143.

The protein belongs to the glucosamine/galactosamine-6-phosphate isomerase family. NagB subfamily.

It carries out the reaction alpha-D-glucosamine 6-phosphate + H2O = beta-D-fructose 6-phosphate + NH4(+). It participates in amino-sugar metabolism; N-acetylneuraminate degradation; D-fructose 6-phosphate from N-acetylneuraminate: step 5/5. Its function is as follows. Catalyzes the reversible isomerization-deamination of glucosamine 6-phosphate (GlcN6P) to form fructose 6-phosphate (Fru6P) and ammonium ion. This Clostridium botulinum (strain Alaska E43 / Type E3) protein is Glucosamine-6-phosphate deaminase.